The chain runs to 207 residues: Large ribosomal subunit protein uL3 (207 aa).

Residues 119-143 are disordered; it reads GFQGSIKRNGQHRGPMAHGSRYHRR.

Belongs to the universal ribosomal protein uL3 family. Part of the 50S ribosomal subunit. Forms a cluster with proteins L14 and L19.

In terms of biological role, one of the primary rRNA binding proteins, it binds directly near the 3'-end of the 23S rRNA, where it nucleates assembly of the 50S subunit. The sequence is that of Large ribosomal subunit protein uL3 from Ligilactobacillus salivarius (strain UCC118) (Lactobacillus salivarius).